The sequence spans 1155 residues: Probable translation initiation factor IF-2 (1155 aa).

A DOD-type homing endonuclease domain is found at 237-367 (FAGVMFGDGC…LSILLLRFEI (131 aa)). Residues 561-781 (TTETHNFIAN…VAGLAQKFLE (221 aa)) enclose the tr-type G domain. Residues 634 to 638 (DTPGH) and 688 to 691 (NKID) each bind GTP.

It belongs to the TRAFAC class translation factor GTPase superfamily. Classic translation factor GTPase family. IF-2 subfamily. In terms of processing, this protein undergoes a protein self splicing that involves a post-translational excision of the intervening region (intein) followed by peptide ligation.

In terms of biological role, function in general translation initiation by promoting the binding of the formylmethionine-tRNA to ribosomes. Seems to function along with eIF-2. This chain is Probable translation initiation factor IF-2 (infB), found in Methanocaldococcus jannaschii (strain ATCC 43067 / DSM 2661 / JAL-1 / JCM 10045 / NBRC 100440) (Methanococcus jannaschii).